The primary structure comprises 139 residues: MSGKGKAGKSGGKAGSETKSMSRSSKAGLQFPVGRVHRLLKKGNYAQRVGAGAPVYMAAVLEYLAAEILELAGNAARDNKKQRIVPRHLQLAIRNDEELHKLLGNVVISQGGVVPHIAPELLPSKSSKGKKDEGVSQEL.

Residues 1 to 27 (MSGKGKAGKSGGKAGSETKSMSRSSKA) are disordered. At S2 the chain carries N-acetylserine. Residues K9 and K13 each carry the N6-acetyllysine modification. Residues 17–27 (ETKSMSRSSKA) show a composition bias toward polar residues. Q110 carries the N5-methylglutamine modification. The segment at 119-139 (PELLPSKSSKGKKDEGVSQEL) is disordered. The span at 129–139 (GKKDEGVSQEL) shows a compositional bias: basic and acidic residues. S136 carries the phosphoserine modification. The [ST]-Q motif signature appears at 136–137 (SQ).

It belongs to the histone H2A family. The nucleosome is a histone octamer containing two molecules each of H2A, H2B, H3 and H4 assembled in one H3-H4 heterotetramer and two H2A-H2B heterodimers. The octamer wraps approximately 147 bp of DNA. Post-translationally, phosphorylated to form H2AS128ph (gamma-H2A) in response to DNA double-strand breaks (DSBs) generated by exogenous genotoxic agents and by stalled replication forks. Phosphorylation is dependent on the DNA damage checkpoint kinases MEC1/ATR and TEL1/ATM, spreads on either side of a detected DSB site and may mark the surrounding chromatin for recruitment of proteins required for DNA damage signaling and repair. Gamma-H2A is removed from the DNA prior to the strand invasion-primer extension step of the repair process and subsequently dephosphorylated. Dephosphorylation is necessary for efficient recovery from the DNA damage checkpoint. Acetylated by ESA1 to form H2AK4ac and H2AK7ac.

It is found in the nucleus. It localises to the chromosome. Core component of nucleosome which plays a central role in DNA double strand break (DSB) repair. Nucleosomes wrap and compact DNA into chromatin, limiting DNA accessibility to the cellular machineries which require DNA as a template. Histones thereby play a central role in transcription regulation, DNA repair, DNA replication and chromosomal stability. DNA accessibility is regulated via a complex set of post-translational modifications of histones, also called histone code, and nucleosome remodeling. In Agaricus bisporus (White button mushroom), this protein is Histone H2A.